We begin with the raw amino-acid sequence, 159 residues long: Small ribosomal subunit protein uS7 (159 aa).

This sequence belongs to the universal ribosomal protein uS7 family. In terms of assembly, part of the 30S ribosomal subunit. Contacts proteins S9 and S11.

Functionally, one of the primary rRNA binding proteins, it binds directly to 16S rRNA where it nucleates assembly of the head domain of the 30S subunit. Is located at the subunit interface close to the decoding center, probably blocks exit of the E-site tRNA. This is Small ribosomal subunit protein uS7 from Wolbachia pipientis wMel.